The following is a 183-amino-acid chain: uncharacterized protein (183 aa).

The SIS domain maps to 27 to 170 (MIKLIDSARS…VAEIMMQKHL (144 aa)).

The protein belongs to the SIS family. PHI subfamily.

This is an uncharacterized protein from Archaeoglobus fulgidus (strain ATCC 49558 / DSM 4304 / JCM 9628 / NBRC 100126 / VC-16).